A 100-amino-acid polypeptide reads, in one-letter code: Small ribosomal subunit protein uS14c (100 aa).

It belongs to the universal ribosomal protein uS14 family. As to quaternary structure, part of the 30S ribosomal subunit.

It localises to the plastid. Its subcellular location is the chloroplast. Functionally, binds 16S rRNA, required for the assembly of 30S particles. The chain is Small ribosomal subunit protein uS14c from Phalaenopsis aphrodite subsp. formosana (Moth orchid).